Reading from the N-terminus, the 104-residue chain is L-rhamnose mutarotase (104 aa).

Y18 contributes to the substrate binding site. H22 functions as the Proton donor in the catalytic mechanism. Substrate is bound by residues Y41 and 76 to 77 (WW).

It belongs to the rhamnose mutarotase family. In terms of assembly, homodimer.

It localises to the cytoplasm. The enzyme catalyses alpha-L-rhamnose = beta-L-rhamnose. It functions in the pathway carbohydrate metabolism; L-rhamnose metabolism. In terms of biological role, involved in the anomeric conversion of L-rhamnose. The polypeptide is L-rhamnose mutarotase (Pectobacterium carotovorum subsp. carotovorum (strain PC1)).